Consider the following 86-residue polypeptide: High affinity immunoglobulin epsilon receptor subunit gamma (86 aa).

Residues methionine 1–alanine 18 form the signal peptide. At leucine 19–glutamine 23 the chain is on the extracellular side. Residues leucine 24 to cysteine 44 traverse the membrane as a helical segment. The Cytoplasmic segment spans residues arginine 45–glutamine 86. An ITAM domain is found at alanine 54–glutamate 82. Tyrosine 65 carries the phosphotyrosine modification. At serine 69 the chain carries Phosphoserine. Tyrosine 76 carries the post-translational modification Phosphotyrosine. Phosphothreonine is present on threonine 78.

The protein belongs to the CD3Z/FCER1G family. In terms of assembly, igE Fc receptor is a tetramer of an alpha chain, a beta chain, and two disulfide linked gamma chains. Associates with FCGR1A; forms a functional signaling complex. The signaling subunit of immunoglobulin gamma (IgG) Fc receptor complex. As a homodimer or a heterodimer of CD247 and FCER1G, associates with the ligand binding subunit FCGR3A to form a functional receptor complex. Associates with CLEC6A. Interacts with CLEC4E. Interacts (via ITAM domain) with SYK (via SH2 domains); activates SYK, enabling integrin-mediated activation of neutrophils and macrophages. Interacts with common beta chain of interleukin 3 receptor CSF2RB and recruits SYK in response to IL3 stimulation; this interaction is direct. Interacts with CD300LH; the interaction may be indirect. Interacts with CD300LD. Interacts with TARM1.

The protein localises to the cell membrane. Functionally, adapter protein containing an immunoreceptor tyrosine-based activation motif (ITAM) that transduces activation signals from various immunoreceptors. As a component of the high-affinity immunoglobulin E (IgE) receptor, mediates allergic inflammatory signaling in mast cells. As a constitutive component of interleukin-3 receptor complex, selectively mediates interleukin 4/IL4 production b basophils priming T-cells toward effector T-helper 2 subset. Associates with pattern recognition receptors CLEC4D and CLEC4E to form a functional signaling complex in myeloid cells. Binding of mycobacterial trehalose 6,6'-dimycolate (TDM) to this receptor complex leads to phosphorylation of ITAM, triggering activation of SYK, CARD9 and NF-kappa-B, consequently driving maturation of antigen-presenting cells and shaping antigen-specific priming of T-cells toward effector T-helper 1 and T-helper 17 cell subtypes. May function cooperatively with other activating receptors. Functionally linked to integrin beta-2/ITGB2-mediated neutrophil activation. Also involved in integrin alpha-2/ITGA2-mediated platelet activation. This is High affinity immunoglobulin epsilon receptor subunit gamma (FCER1G) from Sus scrofa (Pig).